A 303-amino-acid polypeptide reads, in one-letter code: Acetaldehyde dehydrogenase 1 (303 aa).

Catalysis depends on Cys130, which acts as the Acyl-thioester intermediate. NAD(+)-binding positions include 161–169 (SVGPGTRKN) and Asn272.

This sequence belongs to the acetaldehyde dehydrogenase family.

The catalysed reaction is acetaldehyde + NAD(+) + CoA = acetyl-CoA + NADH + H(+). The polypeptide is Acetaldehyde dehydrogenase 1 (Cupriavidus metallidurans (strain ATCC 43123 / DSM 2839 / NBRC 102507 / CH34) (Ralstonia metallidurans)).